Reading from the N-terminus, the 1479-residue chain is WASH complex subunit 2 (1479 aa).

Residues 1–17 (MPEEQPQQQQQPVREQP) show a composition bias toward low complexity. 5 disordered regions span residues 1 to 25 (MPEE…DVPW), 188 to 210 (GGLV…TEKK), 240 to 564 (FIED…GGVK), 576 to 1383 (FSGK…FDDI), and 1419 to 1479 (TSTT…NLFD). The segment covering 242–279 (EDSDSDSSDEEDEEDVDAEDGSDESSSESSSDDDDEKD) has biased composition (acidic residues). The span at 334–349 (SKKSSNSYTSSLSDIL) shows a compositional bias: low complexity. Acidic residues predominate over residues 422–431 (DDDLFGDSEE). Composition is skewed to low complexity over residues 465 to 475 (TTTSSQPQQKK) and 514 to 532 (TPKP…TTTK). A Phosphothreonine modification is found at threonine 535. Over residues 542-552 (ASGSESTTGKS) the composition is skewed to polar residues. Residues 595-620 (TESKASEDDFFSSDKKSTSATKKDAE) are compositionally biased toward basic and acidic residues. Residues 709-723 (PKAPTTATTTTTTKP) show a composition bias toward low complexity. Basic and acidic residues predominate over residues 765–781 (TETKKQPITEEPKKKQD). A compositionally biased stretch (polar residues) spans 802 to 814 (ASISPASPVSTIE). Basic and acidic residues predominate over residues 839 to 885 (DLTKDEPAKSEPTKVEPTKVEPTKAEPTKVEPAKVEPTKVESDKKES). The segment covering 904–916 (KNPTTSSSTTATE) has biased composition (polar residues). The segment covering 951 to 968 (SSTTKKSTTTTTTTTSSK) has biased composition (low complexity). Residues 981 to 990 (KKVEEKKSSD) are compositionally biased toward basic and acidic residues. Low complexity-rich tracts occupy residues 991-1000 (FDSFFSGSDD) and 1010-1021 (KTTTTPPLTSTT). Over residues 1062-1075 (PLTSNNTKNRTKSI) the composition is skewed to polar residues. A compositionally biased stretch (basic and acidic residues) spans 1091–1107 (EKNRSESPTSEKAEPTK). Residues 1108-1123 (KTSNISSLQNKLSLNP) show a composition bias toward polar residues. Over residues 1147–1162 (STNNDNDSSATDLSDS) the composition is skewed to low complexity. Polar residues-rich tracts occupy residues 1163 to 1174 (GRSSPSVTSPTL) and 1220 to 1236 (KSGT…TPTQ). At serine 1249 the chain carries Phosphoserine. Over residues 1277–1292 (EKTSSGKSSPSPTIKS) the composition is skewed to low complexity. Residues 1307-1317 (ASTTTKPTASE) show a composition bias toward polar residues. Residues 1327–1358 (KKSEPETPKETPKETPKEKEQTKEKEQPKETP) show a composition bias toward basic and acidic residues. 2 stretches are compositionally biased toward low complexity: residues 1419–1445 (TSTT…AVDN) and 1452–1466 (NTTT…TPSK).

The protein belongs to the FAM21 family. In terms of assembly, probable component of the WASH complex.

The polypeptide is WASH complex subunit 2 (Dictyostelium discoideum (Social amoeba)).